We begin with the raw amino-acid sequence, 524 residues long: MAEQQLGVLKALDVAKTQLYHFTAIVIAGMGFFTDAYDLFCVSLVTKLLGRIYYFNPESAKPGSLPPHVAAAVNGVALCGTLSGQLFFGWLGDKLGRKKVYGLTLIMMILCSVASGLSFGNEAKGVMTTLCFFRFWLGFGIGGDYPLSATIMSEYANKKTRGAFIAAVFAMQGVGILAGGFVALAVSSIFDKKFPAPTYAVNRALSTPPQVDYIWRIIVMFGALPAALTYYWRMKMPETARYTALVAKNIKQATADMSKVLQTDIELEERVEDDVKDPRQNYGLFSKEFLRRHGLHLLGTTSTWFLLDIAFYSQNLFQKDIFSAIGWIPKAATMNATHEVFRIARAQTLIALCSTVPGYWFTVAFIDTIGRFKIQLNGFFMMTVFMFAIAFPYNHWIKPENRIGFVVMYSLTFFFANFGPNATTFIVPAEIFPARLRSTCHGISAAAGKAGAIIGAFGFLYAAQNQDKAKVDAGYPPGIGVKNSLIVLGVLNFIGMLFTFLVPEPKGKSLEELSGEAEVSHDEK.

The Cytoplasmic segment spans residues 1-24 (MAEQQLGVLKALDVAKTQLYHFTA). The helical transmembrane segment at 25-45 (IVIAGMGFFTDAYDLFCVSLV) threads the bilayer. The Extracellular portion of the chain corresponds to 46-70 (TKLLGRIYYFNPESAKPGSLPPHVA). A helical transmembrane segment spans residues 71-91 (AAVNGVALCGTLSGQLFFGWL). Over 92-99 (GDKLGRKK) the chain is Cytoplasmic. The helical transmembrane segment at 100-120 (VYGLTLIMMILCSVASGLSFG) threads the bilayer. Topologically, residues 121-131 (NEAKGVMTTLC) are extracellular. The chain crosses the membrane as a helical span at residues 132-152 (FFRFWLGFGIGGDYPLSATIM). Residues 153–161 (SEYANKKTR) lie on the Cytoplasmic side of the membrane. Residues 162–182 (GAFIAAVFAMQGVGILAGGFV) traverse the membrane as a helical segment. Topologically, residues 183 to 211 (ALAVSSIFDKKFPAPTYAVNRALSTPPQV) are extracellular. A helical transmembrane segment spans residues 212 to 232 (DYIWRIIVMFGALPAALTYYW). At 233-292 (RMKMPETARYTALVAKNIKQATADMSKVLQTDIELEERVEDDVKDPRQNYGLFSKEFLRR) the chain is on the cytoplasmic side. The chain crosses the membrane as a helical span at residues 293-313 (HGLHLLGTTSTWFLLDIAFYS). Residues 314–348 (QNLFQKDIFSAIGWIPKAATMNATHEVFRIARAQT) lie on the Extracellular side of the membrane. A helical membrane pass occupies residues 349–369 (LIALCSTVPGYWFTVAFIDTI). At 370-371 (GR) the chain is on the cytoplasmic side. The chain crosses the membrane as a helical span at residues 372 to 392 (FKIQLNGFFMMTVFMFAIAFP). The Extracellular portion of the chain corresponds to 393-402 (YNHWIKPENR). The chain crosses the membrane as a helical span at residues 403 to 423 (IGFVVMYSLTFFFANFGPNAT). Residues 424 to 441 (TFIVPAEIFPARLRSTCH) lie on the Cytoplasmic side of the membrane. Residues 442-462 (GISAAAGKAGAIIGAFGFLYA) traverse the membrane as a helical segment. Over 463–484 (AQNQDKAKVDAGYPPGIGVKNS) the chain is Extracellular. A helical transmembrane segment spans residues 485–505 (LIVLGVLNFIGMLFTFLVPEP). Over 506–524 (KGKSLEELSGEAEVSHDEK) the chain is Cytoplasmic.

Belongs to the major facilitator superfamily. Phosphate:H(+) symporter (TC 2.A.1.9) family. Root specific, especially in trichoblasts. In mature plants, localized in root cortical cells and young lateral roots.

It localises to the membrane. Functionally, high-affinity transporter for external inorganic phosphate. The sequence is that of Probable inorganic phosphate transporter 1-2 (PHT1-2) from Arabidopsis thaliana (Mouse-ear cress).